The primary structure comprises 348 residues: Neuronal growth regulator 1 (348 aa).

Residues 1–31 form the signal peptide; the sequence is MVLLAQGACCSNQWLAAVLLSLCSCLPAGQS. 3 Ig-like C2-type domains span residues 32–128, 133–215, and 219–307; these read VDFP…VHLT, PKIY…RVVV, and PTIQ…LPLN. A disulfide bridge connects residues Cys54 and Cys112. N-linked (GlcNAc...) asparagine glycans are attached at residues Asn67 and Asn149. 2 disulfides stabilise this stretch: Cys154–Cys197 and Cys239–Cys291. Tyr181 carries the post-translational modification Phosphotyrosine. N-linked (GlcNAc...) asparagine glycosylation is found at Asn269, Asn280, Asn288, and Asn301. A lipid anchor (GPI-anchor amidated glycine) is attached at Gly318. Residues 319-348 constitute a propeptide, removed in mature form; it reads SACDLFSCWSLALTLSSVISIFYLKNAILQ.

It belongs to the immunoglobulin superfamily. IgLON family. Post-translationally, glycosylated. As to expression, highly expressed in brain.

It is found in the cell membrane. Functionally, may be involved in cell-adhesion. May function as a trans-neural growth-promoting factor in regenerative axon sprouting in the mammalian brain. This Rattus norvegicus (Rat) protein is Neuronal growth regulator 1 (Negr1).